Consider the following 238-residue polypeptide: Thiamine import ATP-binding protein ThiQ (238 aa).

One can recognise an ABC transporter domain in the interval 2 to 230 (LALDKVRYEY…HPHPELAQFV (229 aa)). ATP is bound at residue 32 to 39 (GPSGAGKS).

The protein belongs to the ABC transporter superfamily. Thiamine importer (TC 3.A.1.19.1) family. As to quaternary structure, the complex is composed of two ATP-binding proteins (ThiQ), two transmembrane proteins (ThiP) and a solute-binding protein (ThiB).

The protein localises to the cell inner membrane. It carries out the reaction thiamine(out) + ATP + H2O = thiamine(in) + ADP + phosphate + H(+). Functionally, part of the ABC transporter complex ThiBPQ involved in thiamine import. Responsible for energy coupling to the transport system. This is Thiamine import ATP-binding protein ThiQ from Vibrio cholerae serotype O1 (strain ATCC 39315 / El Tor Inaba N16961).